Here is a 339-residue protein sequence, read N- to C-terminus: DNA-directed RNA polymerase subunit alpha (339 aa).

The interval 1–233 (MVREEVAGST…DLFLPFLHAE (233 aa)) is alpha N-terminal domain (alpha-NTD). Positions 264–339 (KKGIPLNCIF…IDLLKNKLSF (76 aa)) are alpha C-terminal domain (alpha-CTD).

Belongs to the RNA polymerase alpha chain family. In plastids the minimal PEP RNA polymerase catalytic core is composed of four subunits: alpha, beta, beta', and beta''. When a (nuclear-encoded) sigma factor is associated with the core the holoenzyme is formed, which can initiate transcription.

It is found in the plastid. Its subcellular location is the chloroplast. It catalyses the reaction RNA(n) + a ribonucleoside 5'-triphosphate = RNA(n+1) + diphosphate. DNA-dependent RNA polymerase catalyzes the transcription of DNA into RNA using the four ribonucleoside triphosphates as substrates. This Eremopyrum distans protein is DNA-directed RNA polymerase subunit alpha.